The sequence spans 64 residues: Large ribosomal subunit protein uL29 (64 aa).

The protein belongs to the universal ribosomal protein uL29 family.

This is Large ribosomal subunit protein uL29 from Cupriavidus necator (strain ATCC 17699 / DSM 428 / KCTC 22496 / NCIMB 10442 / H16 / Stanier 337) (Ralstonia eutropha).